Here is a 154-residue protein sequence, read N- to C-terminus: Ribonuclease H (154 aa).

Residues 7–148 enclose the RNase H type-1 domain; that stretch reads KPETVEIYTD…ADALAREGIA (142 aa). Residues D16, E54, D76, and D140 each contribute to the Mg(2+) site.

Belongs to the RNase H family. As to quaternary structure, monomer. Mg(2+) is required as a cofactor.

It is found in the cytoplasm. It catalyses the reaction Endonucleolytic cleavage to 5'-phosphomonoester.. Functionally, endonuclease that specifically degrades the RNA of RNA-DNA hybrids. The protein is Ribonuclease H of Paramagnetospirillum magneticum (strain ATCC 700264 / AMB-1) (Magnetospirillum magneticum).